A 419-amino-acid polypeptide reads, in one-letter code: UDP-N-acetylglucosamine 1-carboxyvinyltransferase (419 aa).

22-23 (KN) is a phosphoenolpyruvate binding site. Arginine 92 is a UDP-N-acetyl-alpha-D-glucosamine binding site. The Proton donor role is filled by cysteine 116. Cysteine 116 bears the 2-(S-cysteinyl)pyruvic acid O-phosphothioketal mark. UDP-N-acetyl-alpha-D-glucosamine-binding positions include 121–125 (RPIDQ), aspartate 305, and isoleucine 327.

Belongs to the EPSP synthase family. MurA subfamily.

The protein localises to the cytoplasm. The enzyme catalyses phosphoenolpyruvate + UDP-N-acetyl-alpha-D-glucosamine = UDP-N-acetyl-3-O-(1-carboxyvinyl)-alpha-D-glucosamine + phosphate. Its pathway is cell wall biogenesis; peptidoglycan biosynthesis. Its function is as follows. Cell wall formation. Adds enolpyruvyl to UDP-N-acetylglucosamine. In Trichlorobacter lovleyi (strain ATCC BAA-1151 / DSM 17278 / SZ) (Geobacter lovleyi), this protein is UDP-N-acetylglucosamine 1-carboxyvinyltransferase.